A 955-amino-acid chain; its full sequence is MPSLSLSKLLRVGEGRMVKRLKHIADHVSSLSPEVEDLTDEQLRAKTEEFRARYRDGETLDELLPEAFAVAREASWRVIDQRHFHVQIMGGAALHFGNIAEMKTGEGKTLTCVLPAYLNAIAGDGVHVVTVNDYLAKRDSEWMGRVHRFLGLDTSVILSGMSPAERRAAYAADITYGTNNEFGFDYLRDNMTHSLDDLVQRGHSFAVVDEVDSILIDEARTPLIISGPADASSKWYAEFARIAPLLKRDVHYEVDIRKRTIGVHEAGVELVEDQLGIDNLYEAANSPLVSYLNNAIKAKELYTKDKDYIVREGEVIIVDEFTGRVLVGRRYNEGMHQAIEAKEKVEIKAENQTLATITLQNYFRLYDKLSGMTGTAETEAAELHQIYNLGVIPIPTNRPMVRVDNGDLIYKTEEAKFDAVVDDVVERHEKGQPVLIGTTSVERSEYLSKQFTKRGVAHNVLNAKFHEQEAQIIAEAGRSGAVTVATNMAGRGTDVVLGGNPDIIADIALRKQGLDPVHTPDDYEAAWDDVLDQVKAEVKADADKVREAGGLYVLGTERHESRRIDNQLRGRSGRQGDPGESRFYLSLGDELMRRFNGAALESIMTRLNLPDDVPIEAKMVSKAIKSAQTQVEQQNFEIRKNVLKYDEVMNQQRTVIYNERRQILEGKDMEGQVEKMITDVVTAYVDGATAEGYVEDWDLEQLWTALKTLYPVGVDYKELVGDGDGETNDITADELRETLLTDAHDAYARREAEIDGVAGAGSMRELERRVLLSVLDRKWREHLYEMDYLKEGIGLRAMAQRDPLVEYQREGFDMFGGMLEGLKEESVGFLFNLQVEAAAPQAAQAPGVSVTAASAAATAAASPAPAAPRPLPTQEAAQQAQGTAAPSALRAKGLDDGEPRGLTYSGPAEDGNAQLSRRGAAESDDAADAGTRRQRREAARSQSKGKKAPRTKRKR.

Residues Q87, 105-109 (GEGKT), and D494 contribute to the ATP site. A disordered region spans residues 861 to 955 (ASPAPAAPRP…KKAPRTKRKR (95 aa)). Low complexity predominate over residues 874-888 (QEAAQQAQGTAAPSA). Positions 943–955 (SKGKKAPRTKRKR) are enriched in basic residues.

This sequence belongs to the SecA family. As to quaternary structure, monomer and homodimer. Part of the essential Sec protein translocation apparatus which comprises SecA, SecYEG and auxiliary proteins SecDF. Other proteins may also be involved.

It localises to the cell membrane. The protein localises to the cytoplasm. It carries out the reaction ATP + H2O + cellular proteinSide 1 = ADP + phosphate + cellular proteinSide 2.. Part of the Sec protein translocase complex. Interacts with the SecYEG preprotein conducting channel. Has a central role in coupling the hydrolysis of ATP to the transfer of proteins into and across the cell membrane, serving as an ATP-driven molecular motor driving the stepwise translocation of polypeptide chains across the membrane. The chain is Protein translocase subunit SecA from Rhodococcus jostii (strain RHA1).